A 138-amino-acid chain; its full sequence is ATP synthase epsilon chain (138 aa).

This sequence belongs to the ATPase epsilon chain family. As to quaternary structure, F-type ATPases have 2 components, CF(1) - the catalytic core - and CF(0) - the membrane proton channel. CF(1) has five subunits: alpha(3), beta(3), gamma(1), delta(1), epsilon(1). CF(0) has three main subunits: a, b and c.

It localises to the cell inner membrane. Produces ATP from ADP in the presence of a proton gradient across the membrane. This chain is ATP synthase epsilon chain, found in Geobacter metallireducens (strain ATCC 53774 / DSM 7210 / GS-15).